The sequence spans 249 residues: DNA polymerase sliding clamp 1 (249 aa).

The protein belongs to the PCNA family. As to quaternary structure, forms heterodimers with PCNA2, which then recruit PCNA3; does not form homotrimers. The heterodimers interact with RfcS homotetramers. Heterotrimer which circularizes head-to-tail (head is at N-terminus, tail is at C-terminus) to form a toroid; DNA passes through its center. Replication factor C (RFC) is required to load the toroid on the DNA. Heterotrimer interacts, probably via this subunit, with flap endonuclease 1 (fen), Hjc, Dpo4, and XPF.

Its function is as follows. One of the sliding clamp subunits that acts as a moving platform for DNA processing. Responsible for tethering the catalytic subunit of DNA polymerase to DNA during high-speed replication. Heterotrimer stimulates the Holliday junction resolvase Hjc. DNA polymerase I, DNA ligase and the flap endonuclease may be constitutively associated with the PCNA heterotrimer forming a scanning complex able to couple DNA synthesis and Okazaki fragment maturation. This is DNA polymerase sliding clamp 1 from Saccharolobus solfataricus (strain ATCC 35092 / DSM 1617 / JCM 11322 / P2) (Sulfolobus solfataricus).